We begin with the raw amino-acid sequence, 176 residues long: NAD(P)H-quinone oxidoreductase subunit 6, chloroplastic (176 aa).

5 helical membrane-spanning segments follow: residues 10–30, 32–52, 60–80, 107–127, and 152–172; these read FLLV…VLLT, PIFS…FHIP, AAQL…AVMF, IFVS…IWTT, and FFLP…GAIA.

The protein belongs to the complex I subunit 6 family. NDH is composed of at least 16 different subunits, 5 of which are encoded in the nucleus.

It localises to the plastid. The protein localises to the chloroplast thylakoid membrane. It carries out the reaction a plastoquinone + NADH + (n+1) H(+)(in) = a plastoquinol + NAD(+) + n H(+)(out). It catalyses the reaction a plastoquinone + NADPH + (n+1) H(+)(in) = a plastoquinol + NADP(+) + n H(+)(out). NDH shuttles electrons from NAD(P)H:plastoquinone, via FMN and iron-sulfur (Fe-S) centers, to quinones in the photosynthetic chain and possibly in a chloroplast respiratory chain. The immediate electron acceptor for the enzyme in this species is believed to be plastoquinone. Couples the redox reaction to proton translocation, and thus conserves the redox energy in a proton gradient. This chain is NAD(P)H-quinone oxidoreductase subunit 6, chloroplastic (ndhG), found in Buxus microphylla (Littleleaf boxwood).